The primary structure comprises 224 residues: UPF0111 protein CT_691 (224 aa).

This sequence belongs to the UPF0111 family.

The polypeptide is UPF0111 protein CT_691 (Chlamydia trachomatis serovar D (strain ATCC VR-885 / DSM 19411 / UW-3/Cx)).